The sequence spans 182 residues: Adenine phosphoribosyltransferase (182 aa).

Belongs to the purine/pyrimidine phosphoribosyltransferase family. Homodimer.

The protein localises to the cytoplasm. It catalyses the reaction AMP + diphosphate = 5-phospho-alpha-D-ribose 1-diphosphate + adenine. The protein operates within purine metabolism; AMP biosynthesis via salvage pathway; AMP from adenine: step 1/1. Catalyzes a salvage reaction resulting in the formation of AMP, that is energically less costly than de novo synthesis. This chain is Adenine phosphoribosyltransferase, found in Koribacter versatilis (strain Ellin345).